The chain runs to 276 residues: Malectin-B (276 aa).

The first 26 residues, 1–26 (MLSIRTVLGPLAAILLTVIGPFGAHG), serve as a signal peptide directing secretion. Over 27 to 253 (SGLADKVMWA…TPNPYASDNS (227 aa)) the chain is Lumenal. 5 residues coordinate a carbohydrate: tyrosine 67, tyrosine 89, tyrosine 116, phenylalanine 117, and aspartate 186. Positions 202-249 (DVPQLQPHPGLEKKEEEEEEEEEEGSPSKKQSNKNRVQSGPRTPNPYA) are disordered. The span at 216 to 226 (EEEEEEEEEEG) shows a compositional bias: acidic residues. Residues 229–249 (SKKQSNKNRVQSGPRTPNPYA) are compositionally biased toward polar residues. Asparagine 252 carries an N-linked (GlcNAc...) asparagine glycan. A helical membrane pass occupies residues 254–274 (SLMFPILVAFGVFIPTLFCLC). Residues 275–276 (RL) are Cytoplasmic-facing.

Belongs to the malectin family.

Its subcellular location is the endoplasmic reticulum membrane. Its function is as follows. Carbohydrate-binding protein with a strong ligand preference for Glc2-N-glycan. May play a role in the early steps of protein N-glycosylation. Can bind di- or higher oligomers but not monomers of glucose, including maltose, maltotriose, maltotetraose, maltoheptaose, nigerose, kojibose, cellobiose and isomaltose, although based on their subcellular locations, these are unlikely to all be physiological ligands. The polypeptide is Malectin-B (Xenopus laevis (African clawed frog)).